The following is a 542-amino-acid chain: Dihydropyrimidinase (542 aa).

His62, His64, and Lys167 together coordinate Zn(2+). At Lys167 the chain carries N6-carboxylysine. A substrate-binding site is contributed by Tyr172. The Zn(2+) site is built by His199 and His255. Ser331 contributes to the substrate binding site. Asp358 provides a ligand contact to Zn(2+). Asn392 contacts substrate.

It belongs to the metallo-dependent hydrolases superfamily. Hydantoinase/dihydropyrimidinase family. As to quaternary structure, homotetramer. Requires Zn(2+) as cofactor. In terms of processing, carboxylation allows a single lysine to coordinate two zinc ions.

The catalysed reaction is 5,6-dihydrouracil + H2O = 3-(carbamoylamino)propanoate + H(+). Catalyzes the second step of the reductive pyrimidine degradation, the reversible hydrolytic ring opening of dihydropyrimidines. Can catalyze the ring opening of 5,6-dihydrouracil to N-carbamyl-alanine and of 5,6-dihydrothymine to N-carbamyl-amino isobutyrate. In Lachancea kluyveri (strain ATCC 58438 / CBS 3082 / BCRC 21498 / NBRC 1685 / JCM 7257 / NCYC 543 / NRRL Y-12651) (Yeast), this protein is Dihydropyrimidinase (PYD2).